The primary structure comprises 358 residues: DNA polymerase IV (358 aa).

Positions 4-185 (IIHVDMDCFY…LPLIKIPGVG (182 aa)) constitute a UmuC domain. Mg(2+) contacts are provided by Asp-8 and Asp-103. Glu-104 is an active-site residue.

The protein belongs to the DNA polymerase type-Y family. In terms of assembly, monomer. Requires Mg(2+) as cofactor.

It is found in the cytoplasm. The catalysed reaction is DNA(n) + a 2'-deoxyribonucleoside 5'-triphosphate = DNA(n+1) + diphosphate. Poorly processive, error-prone DNA polymerase involved in untargeted mutagenesis. Copies undamaged DNA at stalled replication forks, which arise in vivo from mismatched or misaligned primer ends. These misaligned primers can be extended by PolIV. Exhibits no 3'-5' exonuclease (proofreading) activity. May be involved in translesional synthesis, in conjunction with the beta clamp from PolIII. The chain is DNA polymerase IV from Shewanella halifaxensis (strain HAW-EB4).